Consider the following 592-residue polypeptide: Frizzled-1 (592 aa).

A disordered region spans residues 1-26 (MAERRGPAGGGSGEVGGGRRAGGDRC). The N-terminal stretch at 1 to 48 (MAERRGPAGGGSGEVGGGRRAGGDRCPRRPPALPLLLLLWAAALPAGG) is a signal peptide. Residues 7 to 20 (PAGGGSGEVGGGRR) are compositionally biased toward gly residues. The Extracellular segment spans residues 49–271 (QPAAQPAALS…PEELRFSRTW (223 aa)). In terms of domain architecture, FZ spans 65-184 (PDHGYCQPIS…HGAGELCVGQ (120 aa)). Disulfide bonds link Cys-70–Cys-131, Cys-78–Cys-124, Cys-115–Cys-152, Cys-141–Cys-181, and Cys-145–Cys-169. A glycan (N-linked (GlcNAc...) asparagine) is linked at Asn-84. Asn-185 is a glycosylation site (N-linked (GlcNAc...) asparagine). Residues 185-219 (NASERGTPTPALRPESWTSNPHRGGGAGGSGPGEA) form a disordered region. Gly residues predominate over residues 207–218 (RGGGAGGSGPGE). Residues 272–292 (IGIWSVLCCASTLFTVLTYLV) form a helical membrane-spanning segment. Topologically, residues 293–303 (DMKRFSYPERP) are cytoplasmic. A helical transmembrane segment spans residues 304–324 (IIFLSGCYTAVAVAYIAGFLL). At 325–351 (EERVVCNERFAEDGSRTVAQGTKREGC) the chain is on the extracellular side. The chain crosses the membrane as a helical span at residues 352-372 (TILFMMLYFFGMASSIWWVIL). Topologically, residues 373-394 (SLTWFLAAGMKWGHEAIEANSQ) are cytoplasmic. The helical transmembrane segment at 395 to 415 (YFHLAAWAVPAIKTITILALG) threads the bilayer. At 416-438 (QVDGDVLSGVCFVGINNVDALRG) the chain is on the extracellular side. A helical transmembrane segment spans residues 439-459 (FVLAPLFVYLFIGTSFLLAGF). The Cytoplasmic portion of the chain corresponds to 460–485 (VSLFRIRTIMKHDGTKTEKLEKLMVR). The helical transmembrane segment at 486–506 (IGIFSVLYTVPATIVIACYFY) threads the bilayer. The Extracellular portion of the chain corresponds to 507 to 546 (EQAFREQWERSWVTQSCKSYAIPCPNNHSSHHPPMSPDFT). N-linked (GlcNAc...) asparagine glycosylation is present at Asn-533. The helical transmembrane segment at 547 to 567 (VFMIKYLMTLIVGITSGFWIW) threads the bilayer. The Cytoplasmic portion of the chain corresponds to 568 to 592 (SGKTLNSWRKFYTRLTNSKQGETTV). A Lys-Thr-X-X-X-Trp motif, mediates interaction with the PDZ domain of Dvl family members motif is present at residues 570–575 (KTLNSW). The PDZ-binding signature appears at 590 to 592 (TTV).

Belongs to the G-protein coupled receptor Fz/Smo family. Expressed in the lens, otic placode (medial wall of the vesicle) and in epibranchial placode. Also expressed in the developing somites (dermomyotome).

It is found in the cell membrane. In terms of biological role, receptor for Wnt proteins. Functions in the canonical Wnt/beta-catenin signaling pathway. The canonical Wnt/beta-catenin signaling pathway leads to the activation of disheveled proteins, inhibition of GSK-3 kinase, nuclear accumulation of beta-catenin and activation of Wnt target genes. A second signaling pathway involving PKC and calcium fluxes has been seen for some family members, but it is not yet clear if it represents a distinct pathway or if it can be integrated in the canonical pathway, as PKC seems to be required for Wnt-mediated inactivation of GSK-3 kinase. Both pathways seem to involve interactions with G-proteins. May be involved in transduction and intercellular transmission of polarity information during tissue morphogenesis and/or in differentiated tissues. The polypeptide is Frizzled-1 (FZD1) (Gallus gallus (Chicken)).